The chain runs to 552 residues: CCR4-NOT transcription complex subunit 6 (552 aa).

4 LRR repeats span residues 52-73 (HLTALHLSDNSLSCIPSDIAKL), 75-96 (NLVYLDLSHNQIQSLPAELGNM), 98-120 (SLRELHLNYNQLRVLPFELGKLF), and 121-143 (QLQTLSLKGNPLTQDILNLCLEP). Residues 153 to 552 (LLDNLSVSTE…VNGIHLPGRR (400 aa)) form a nuclease domain region. A Mg(2+)-binding site is contributed by glutamate 235. Residues glutamate 235, glutamate 271, histidine 356, and proline 361 each contribute to the substrate site. Residue aspartate 407 coordinates Mg(2+). The active-site Proton donor/acceptor is aspartate 407. Substrate contacts are provided by asparagine 409, asparagine 476, and phenylalanine 481.

The protein belongs to the CCR4/nocturin family. Subunit of the CCR4-NOT core complex. Requires Mg(2+) as cofactor.

The protein localises to the cytoplasm. It localises to the nucleus. It catalyses the reaction Exonucleolytic cleavage of poly(A) to 5'-AMP.. Poly(A) nuclease involved in mRNA decay. Has 3'-5' RNase activity. The CCR4-NOT complex functions as a general transcription regulation complex. Enhances ligand-dependent transcriptional activity of nuclear hormone receptors. The sequence is that of CCR4-NOT transcription complex subunit 6 (cnot6) from Xenopus laevis (African clawed frog).